The sequence spans 321 residues: Ribosomal RNA small subunit methyltransferase H (321 aa).

S-adenosyl-L-methionine contacts are provided by residues 43-45 (GGH), Asp63, Phe89, Asp110, and Gln117. A disordered region spans residues 286-321 (HPAGKALRAGPRETRDNPRSRSAVLRVAERSERHAA). 2 stretches are compositionally biased toward basic and acidic residues: residues 295 to 304 (GPRETRDNPR) and 312 to 321 (VAERSERHAA).

Belongs to the methyltransferase superfamily. RsmH family.

It localises to the cytoplasm. The catalysed reaction is cytidine(1402) in 16S rRNA + S-adenosyl-L-methionine = N(4)-methylcytidine(1402) in 16S rRNA + S-adenosyl-L-homocysteine + H(+). Specifically methylates the N4 position of cytidine in position 1402 (C1402) of 16S rRNA. The polypeptide is Ribosomal RNA small subunit methyltransferase H (Acidithiobacillus ferrooxidans (strain ATCC 23270 / DSM 14882 / CIP 104768 / NCIMB 8455) (Ferrobacillus ferrooxidans (strain ATCC 23270))).